The primary structure comprises 220 residues: Deoxyribose-phosphate aldolase (220 aa).

D89 serves as the catalytic Proton donor/acceptor. K151 (schiff-base intermediate with acetaldehyde) is an active-site residue. K180 functions as the Proton donor/acceptor in the catalytic mechanism.

Belongs to the DeoC/FbaB aldolase family. DeoC type 1 subfamily.

Its subcellular location is the cytoplasm. The enzyme catalyses 2-deoxy-D-ribose 5-phosphate = D-glyceraldehyde 3-phosphate + acetaldehyde. It participates in carbohydrate degradation; 2-deoxy-D-ribose 1-phosphate degradation; D-glyceraldehyde 3-phosphate and acetaldehyde from 2-deoxy-alpha-D-ribose 1-phosphate: step 2/2. Catalyzes a reversible aldol reaction between acetaldehyde and D-glyceraldehyde 3-phosphate to generate 2-deoxy-D-ribose 5-phosphate. This Staphylococcus haemolyticus (strain JCSC1435) protein is Deoxyribose-phosphate aldolase.